The sequence spans 405 residues: Tryptophan synthase beta chain (405 aa).

An N6-(pyridoxal phosphate)lysine modification is found at K98.

The protein belongs to the TrpB family. In terms of assembly, tetramer of two alpha and two beta chains. It depends on pyridoxal 5'-phosphate as a cofactor.

It carries out the reaction (1S,2R)-1-C-(indol-3-yl)glycerol 3-phosphate + L-serine = D-glyceraldehyde 3-phosphate + L-tryptophan + H2O. It functions in the pathway amino-acid biosynthesis; L-tryptophan biosynthesis; L-tryptophan from chorismate: step 5/5. In terms of biological role, the beta subunit is responsible for the synthesis of L-tryptophan from indole and L-serine. This chain is Tryptophan synthase beta chain, found in Methylococcus capsulatus (strain ATCC 33009 / NCIMB 11132 / Bath).